The following is a 60-amino-acid chain: Large ribosomal subunit protein uL30 (60 aa).

It belongs to the universal ribosomal protein uL30 family. As to quaternary structure, part of the 50S ribosomal subunit.

In Streptococcus equi subsp. equi (strain 4047), this protein is Large ribosomal subunit protein uL30.